The primary structure comprises 347 residues: NADH-ubiquinone oxidoreductase chain 2 (347 aa).

A run of 10 helical transmembrane segments spans residues 13–33 (VFTG…WLGL), 55–75 (AAIK…MAIL), 96–116 (LMIV…FWVP), 122–142 (VPLT…ISIM), 151–171 (TNIL…GGLN), 178–198 (ILAY…PYNP), 199–219 (NITI…FLIL), 237–257 (LTWL…LPPL), 277–297 (IAPT…ARLI), and 326–346 (LPTL…ILSI).

The protein belongs to the complex I subunit 2 family. As to quaternary structure, core subunit of respiratory chain NADH dehydrogenase (Complex I) which is composed of 45 different subunits. Interacts with TMEM242.

It is found in the mitochondrion inner membrane. It carries out the reaction a ubiquinone + NADH + 5 H(+)(in) = a ubiquinol + NAD(+) + 4 H(+)(out). In terms of biological role, core subunit of the mitochondrial membrane respiratory chain NADH dehydrogenase (Complex I) which catalyzes electron transfer from NADH through the respiratory chain, using ubiquinone as an electron acceptor. Essential for the catalytic activity and assembly of complex I. This chain is NADH-ubiquinone oxidoreductase chain 2, found in Pongo pygmaeus (Bornean orangutan).